Reading from the N-terminus, the 635-residue chain is MERWSINDSAKIYNLPNWGADLFSINKKGNVCVHPSPTSKHSIDLRALVDDLIKRKIKPPILLRFMDVLQGRIAAINRAFKYAIDENDYPSTYQTFYPIKVNQQRQVVEAIAKFGKRYNIGIEVGSKPELVIGISFATGNGIPIICNGYKDKEYIETVLYATKIGYDITIVVEKMFELEKIIALSKKTGIKPKLGIRVKLSSKGTGKWATSGGEDAKFGLRMSEIIAAIGLLEQNELLDSVKLIHFHIGSQITKIDKIKSALIEGTRVYAEMRKLGVGIEYVDIGGGLGVDYDGSKSSYFSSVNYSIEEYANDVIYQIKNICEDAGVECPNIISESGRATAAHYSVLVTNLLNTNTQNLMPDFEETLNGAEKLAPTVKKLVDIYKSIDRYSLREDYHDTVQLIQEAVSLFSLGYLTLAERAMAEWLHGKILRKINGIVEKIKPIPEELQNFQLSLRQTYFANFSLFQSIPDSWAIDQLFPIVPIQRLNQKPDVMASIADITCDSDGEITSFVGENGRTKYLPLHKIRKDEDYFVGFFLIGAYQEILGDMHNLFGDTNAVHVTFNKKTGYKIDTVINGDATWESLKYVQYKGPEILKHVRDTMEKDVALRKVSIEESSHFLELLDRTLLGYTYLGE.

Residue lysine 100 is modified to N6-(pyridoxal phosphate)lysine. 282–292 (VDIGGGLGVDY) contributes to the substrate binding site.

This sequence belongs to the Orn/Lys/Arg decarboxylase class-II family. SpeA subfamily. Mg(2+) serves as cofactor. It depends on pyridoxal 5'-phosphate as a cofactor.

It carries out the reaction L-arginine + H(+) = agmatine + CO2. Its pathway is amine and polyamine biosynthesis; agmatine biosynthesis; agmatine from L-arginine: step 1/1. In terms of biological role, catalyzes the biosynthesis of agmatine from arginine. This chain is Biosynthetic arginine decarboxylase, found in Geobacter metallireducens (strain ATCC 53774 / DSM 7210 / GS-15).